The primary structure comprises 274 residues: Putative pyruvate, phosphate dikinase regulatory protein 1 (274 aa).

149-156 (GISRTSKT) contacts ADP.

It belongs to the pyruvate, phosphate/water dikinase regulatory protein family. PDRP subfamily.

It carries out the reaction N(tele)-phospho-L-histidyl/L-threonyl-[pyruvate, phosphate dikinase] + ADP = N(tele)-phospho-L-histidyl/O-phospho-L-threonyl-[pyruvate, phosphate dikinase] + AMP + H(+). It catalyses the reaction N(tele)-phospho-L-histidyl/O-phospho-L-threonyl-[pyruvate, phosphate dikinase] + phosphate + H(+) = N(tele)-phospho-L-histidyl/L-threonyl-[pyruvate, phosphate dikinase] + diphosphate. Its function is as follows. Bifunctional serine/threonine kinase and phosphorylase involved in the regulation of the pyruvate, phosphate dikinase (PPDK) by catalyzing its phosphorylation/dephosphorylation. The polypeptide is Putative pyruvate, phosphate dikinase regulatory protein 1 (Listeria monocytogenes serotype 4b (strain F2365)).